A 347-amino-acid chain; its full sequence is N-acetyl-gamma-glutamyl-phosphate reductase (347 aa).

Residue Cys-152 is part of the active site.

The protein belongs to the NAGSA dehydrogenase family. Type 1 subfamily.

Its subcellular location is the cytoplasm. The catalysed reaction is N-acetyl-L-glutamate 5-semialdehyde + phosphate + NADP(+) = N-acetyl-L-glutamyl 5-phosphate + NADPH + H(+). Its pathway is amino-acid biosynthesis; L-arginine biosynthesis; N(2)-acetyl-L-ornithine from L-glutamate: step 3/4. Its function is as follows. Catalyzes the NADPH-dependent reduction of N-acetyl-5-glutamyl phosphate to yield N-acetyl-L-glutamate 5-semialdehyde. This chain is N-acetyl-gamma-glutamyl-phosphate reductase, found in Ehrlichia ruminantium (strain Gardel).